The primary structure comprises 638 residues: Trichohyalin-like protein 1 (638 aa).

Positions His49–Pro84 constitute an EF-hand domain. Positions Ser134–Gln638 are disordered. Polar residues predominate over residues Leu166–Gln179. Composition is skewed to basic and acidic residues over residues Ile221–Thr246, Asp294–Gly309, and Glu318–Glu328. Residues Asp343–Ser357 are compositionally biased toward polar residues. 6 stretches are compositionally biased toward basic and acidic residues: residues Ser358 to Ile372, Arg395 to Ser409, Glu419 to Glu435, Arg479 to His490, Ala526 to Ser548, and Ala622 to Glu631.

Belongs to the S-100 family.

The chain is Trichohyalin-like protein 1 (Tchhl1) from Mus musculus (Mouse).